Reading from the N-terminus, the 71-residue chain is Large ribosomal subunit protein bL31 (71 aa).

Zn(2+)-binding residues include C16, C18, C37, and C40.

The protein belongs to the bacterial ribosomal protein bL31 family. Type A subfamily. In terms of assembly, part of the 50S ribosomal subunit. The cofactor is Zn(2+).

Binds the 23S rRNA. The polypeptide is Large ribosomal subunit protein bL31 (Pseudoalteromonas atlantica (strain T6c / ATCC BAA-1087)).